The following is a 166-amino-acid chain: Small ribosomal subunit protein bS6 (166 aa).

The tract at residues 97-166 is disordered; sequence EEGPSAMMRK…EEAETATDGE (70 aa). Positions 105–159 are enriched in basic and acidic residues; sequence RKADRDRERDDRGGGFRGEREGGFRGDREGGFRGGDRDGGGFRGDRGPRRPREEA.

This sequence belongs to the bacterial ribosomal protein bS6 family.

Its function is as follows. Binds together with bS18 to 16S ribosomal RNA. In Bradyrhizobium diazoefficiens (strain JCM 10833 / BCRC 13528 / IAM 13628 / NBRC 14792 / USDA 110), this protein is Small ribosomal subunit protein bS6.